The chain runs to 95 residues: YcgL domain-containing protein Sden_1630 (95 aa).

The YcgL domain maps to 1 to 85 (MICTVYKSRR…PKANLLEEHK (85 aa)).

The chain is YcgL domain-containing protein Sden_1630 from Shewanella denitrificans (strain OS217 / ATCC BAA-1090 / DSM 15013).